Reading from the N-terminus, the 713-residue chain is Polyribonucleotide nucleotidyltransferase (713 aa).

D493 and D499 together coordinate Mg(2+). Positions 560–619 constitute a KH domain; sequence PRMITIKINPEKIRDVIGKGGSVIRALTEETGTTIDISDDGVVTIASTNSEGMAEAKKRI. The S1 motif domain occupies 629 to 697; it reads GHVYEGTVLK…EKGRVRLSAK (69 aa).

The protein belongs to the polyribonucleotide nucleotidyltransferase family. Mg(2+) is required as a cofactor.

The protein localises to the cytoplasm. It carries out the reaction RNA(n+1) + phosphate = RNA(n) + a ribonucleoside 5'-diphosphate. In terms of biological role, involved in mRNA degradation. Catalyzes the phosphorolysis of single-stranded polyribonucleotides processively in the 3'- to 5'-direction. The chain is Polyribonucleotide nucleotidyltransferase from Burkholderia mallei (strain NCTC 10247).